Reading from the N-terminus, the 201-residue chain is Small ribosomal subunit protein uS4 (201 aa).

The S4 RNA-binding domain occupies 91 to 151 (SRLDNVVYRA…EKSQKMIWFE (61 aa)).

The protein belongs to the universal ribosomal protein uS4 family. Part of the 30S ribosomal subunit. Contacts protein S5. The interaction surface between S4 and S5 is involved in control of translational fidelity.

Functionally, one of the primary rRNA binding proteins, it binds directly to 16S rRNA where it nucleates assembly of the body of the 30S subunit. Its function is as follows. With S5 and S12 plays an important role in translational accuracy. The polypeptide is Small ribosomal subunit protein uS4 (Corynebacterium diphtheriae (strain ATCC 700971 / NCTC 13129 / Biotype gravis)).